A 227-amino-acid chain; its full sequence is Albumin-2 (227 aa).

Hemopexin repeat units follow at residues 3-46, 61-111, 117-165, and 171-221; these read PGYI…GPTP, SYGI…FPFF, ESGI…YPCF, and ESGA…WPSL. Positions 7 and 65 each coordinate Ca(2+). Serine 118 contacts spermine. Positions 121 and 175 each coordinate Ca(2+).

In terms of assembly, monomer and homodimer. Dimers are prevalent in solution.

The protein localises to the cytoplasm. The protein resides in the cytosol. Functionally, may play a role in response to oxidative stress and polyamine biosynthesis. The monomeric form binds one hemin per monomer. In the dimeric form, about half of the dimers bind one molecule of spermine each under physiological conditions. Ligand binding is mutually exclusive as binding of hemin leads to dissociation of the dimer. This Lathyrus sativus (White vetchling) protein is Albumin-2.